A 161-amino-acid chain; its full sequence is UPF0262 protein mll6455 (161 aa).

Belongs to the UPF0262 family.

This Mesorhizobium japonicum (strain LMG 29417 / CECT 9101 / MAFF 303099) (Mesorhizobium loti (strain MAFF 303099)) protein is UPF0262 protein mll6455.